The following is a 116-amino-acid chain: NADH-ubiquinone oxidoreductase chain 3 (116 aa).

The next 3 helical transmembrane spans lie at L3–F23, F56–L76, and P85–Y105.

It belongs to the complex I subunit 3 family.

The protein resides in the mitochondrion membrane. The catalysed reaction is a ubiquinone + NADH + 5 H(+)(in) = a ubiquinol + NAD(+) + 4 H(+)(out). Its function is as follows. Core subunit of the mitochondrial membrane respiratory chain NADH dehydrogenase (Complex I) that is believed to belong to the minimal assembly required for catalysis. Complex I functions in the transfer of electrons from NADH to the respiratory chain. The immediate electron acceptor for the enzyme is believed to be ubiquinone. The polypeptide is NADH-ubiquinone oxidoreductase chain 3 (MT-ND3) (Oncorhynchus masou (Cherry salmon)).